The primary structure comprises 535 residues: Bifunctional purine biosynthesis protein PurH (535 aa).

Residues 6–151 (TRLPIRRALI…KNHKDVAIVV (146 aa)) form the MGS-like domain.

This sequence belongs to the PurH family.

The catalysed reaction is (6R)-10-formyltetrahydrofolate + 5-amino-1-(5-phospho-beta-D-ribosyl)imidazole-4-carboxamide = 5-formamido-1-(5-phospho-D-ribosyl)imidazole-4-carboxamide + (6S)-5,6,7,8-tetrahydrofolate. It carries out the reaction IMP + H2O = 5-formamido-1-(5-phospho-D-ribosyl)imidazole-4-carboxamide. Its pathway is purine metabolism; IMP biosynthesis via de novo pathway; 5-formamido-1-(5-phospho-D-ribosyl)imidazole-4-carboxamide from 5-amino-1-(5-phospho-D-ribosyl)imidazole-4-carboxamide (10-formyl THF route): step 1/1. It participates in purine metabolism; IMP biosynthesis via de novo pathway; IMP from 5-formamido-1-(5-phospho-D-ribosyl)imidazole-4-carboxamide: step 1/1. In Pseudomonas fluorescens (strain SBW25), this protein is Bifunctional purine biosynthesis protein PurH.